We begin with the raw amino-acid sequence, 296 residues long: Formamidopyrimidine-DNA glycosylase (296 aa).

Pro2 acts as the Schiff-base intermediate with DNA in catalysis. Catalysis depends on Glu3, which acts as the Proton donor. Lys58 serves as the catalytic Proton donor; for beta-elimination activity. DNA contacts are provided by His104, Arg126, and Lys169. The FPG-type zinc finger occupies 260–296 (SVYDRESQACRTPGCGGTVARIVQAGRSTFYCATCQK). Catalysis depends on Arg286, which acts as the Proton donor; for delta-elimination activity.

This sequence belongs to the FPG family. In terms of assembly, monomer. Zn(2+) is required as a cofactor.

The catalysed reaction is Hydrolysis of DNA containing ring-opened 7-methylguanine residues, releasing 2,6-diamino-4-hydroxy-5-(N-methyl)formamidopyrimidine.. The enzyme catalyses 2'-deoxyribonucleotide-(2'-deoxyribose 5'-phosphate)-2'-deoxyribonucleotide-DNA = a 3'-end 2'-deoxyribonucleotide-(2,3-dehydro-2,3-deoxyribose 5'-phosphate)-DNA + a 5'-end 5'-phospho-2'-deoxyribonucleoside-DNA + H(+). Involved in base excision repair of DNA damaged by oxidation or by mutagenic agents. Acts as a DNA glycosylase that recognizes and removes damaged bases. Has a preference for oxidized purines, such as 7,8-dihydro-8-oxoguanine (8-oxoG). Has AP (apurinic/apyrimidinic) lyase activity and introduces nicks in the DNA strand. Cleaves the DNA backbone by beta-delta elimination to generate a single-strand break at the site of the removed base with both 3'- and 5'-phosphates. The chain is Formamidopyrimidine-DNA glycosylase from Rhizobium johnstonii (strain DSM 114642 / LMG 32736 / 3841) (Rhizobium leguminosarum bv. viciae).